The sequence spans 443 residues: Intermediate filament protein ifd-2 (443 aa).

The segment at 1-58 (MTDPLNPTRLQNHPALARIIESGRTNLPTGITTSGALSAYAQNAAAIIRDNREREKVE) is head. Residues 55 to 405 (EKVEIADLNN…KLMENAEHLR (351 aa)) form the IF rod domain. Positions 59-90 (IADLNNRLARYVEKVRFLEAQNRVLENDIGVF) are coil 1A. Residues 91 to 104 (RNAAHTHSERIAVY) form a linker 1 region. A coil 1B region spans residues 105-239 (FESEKASLFT…SQHDIAIREE (135 aa)). Residues 240–257 (ISKARRDTTNKNRDYFHN) form a linker 12 region. Positions 258-403 (ELHAAMKEIR…YRKLMENAEH (146 aa)) are coil 2. The segment at 404-443 (LRTTVQTHVTYNAPPPPLPQSGPRTTSYHAYGSAYNDSLL) is tail.

The protein belongs to the intermediate filament family.

It localises to the cytoplasm. Its function is as follows. Cytoplasmic intermediate filaments provide mechanical strength to cells. Not essential protein. This Caenorhabditis elegans protein is Intermediate filament protein ifd-2 (ifd-2).